The primary structure comprises 223 residues: Thiamine-phosphate synthase (223 aa).

Residues 42-46 (QLRDK) and asparagine 83 each bind 4-amino-2-methyl-5-(diphosphooxymethyl)pyrimidine. Mg(2+)-binding residues include aspartate 84 and aspartate 103. Serine 122 is a binding site for 4-amino-2-methyl-5-(diphosphooxymethyl)pyrimidine. 148–150 (TPT) serves as a coordination point for 2-[(2R,5Z)-2-carboxy-4-methylthiazol-5(2H)-ylidene]ethyl phosphate. Lysine 151 is a 4-amino-2-methyl-5-(diphosphooxymethyl)pyrimidine binding site. Glycine 179 contributes to the 2-[(2R,5Z)-2-carboxy-4-methylthiazol-5(2H)-ylidene]ethyl phosphate binding site.

It belongs to the thiamine-phosphate synthase family. The cofactor is Mg(2+).

It catalyses the reaction 2-[(2R,5Z)-2-carboxy-4-methylthiazol-5(2H)-ylidene]ethyl phosphate + 4-amino-2-methyl-5-(diphosphooxymethyl)pyrimidine + 2 H(+) = thiamine phosphate + CO2 + diphosphate. The catalysed reaction is 2-(2-carboxy-4-methylthiazol-5-yl)ethyl phosphate + 4-amino-2-methyl-5-(diphosphooxymethyl)pyrimidine + 2 H(+) = thiamine phosphate + CO2 + diphosphate. The enzyme catalyses 4-methyl-5-(2-phosphooxyethyl)-thiazole + 4-amino-2-methyl-5-(diphosphooxymethyl)pyrimidine + H(+) = thiamine phosphate + diphosphate. It functions in the pathway cofactor biosynthesis; thiamine diphosphate biosynthesis; thiamine phosphate from 4-amino-2-methyl-5-diphosphomethylpyrimidine and 4-methyl-5-(2-phosphoethyl)-thiazole: step 1/1. Functionally, condenses 4-methyl-5-(beta-hydroxyethyl)thiazole monophosphate (THZ-P) and 2-methyl-4-amino-5-hydroxymethyl pyrimidine pyrophosphate (HMP-PP) to form thiamine monophosphate (TMP). In Mycolicibacterium paratuberculosis (strain ATCC BAA-968 / K-10) (Mycobacterium paratuberculosis), this protein is Thiamine-phosphate synthase.